The sequence spans 139 residues: Large ribosomal subunit protein uL16 (139 aa).

Over residues 1–13 (MLQPARRKYRKEQ) the composition is skewed to basic residues. The segment at 1 to 23 (MLQPARRKYRKEQKGRNTGISHS) is disordered.

It belongs to the universal ribosomal protein uL16 family. As to quaternary structure, part of the 50S ribosomal subunit.

Its function is as follows. Binds 23S rRNA and is also seen to make contacts with the A and possibly P site tRNAs. The chain is Large ribosomal subunit protein uL16 from Herminiimonas arsenicoxydans.